The following is a 476-amino-acid chain: Cysteine--tRNA ligase (476 aa).

Cysteine 28 is a Zn(2+) binding site. The 'HIGH' region signature appears at 30-40 (PTVYDHTHLGH). Residues cysteine 208, histidine 233, and glutamate 237 each coordinate Zn(2+). The 'KMSKS' region motif lies at 265 to 269 (KMSKS). Residue lysine 268 participates in ATP binding.

The protein belongs to the class-I aminoacyl-tRNA synthetase family. Zn(2+) is required as a cofactor.

The protein resides in the cytoplasm. It carries out the reaction tRNA(Cys) + L-cysteine + ATP = L-cysteinyl-tRNA(Cys) + AMP + diphosphate. This chain is Cysteine--tRNA ligase, found in Methanococcus maripaludis (strain C6 / ATCC BAA-1332).